Consider the following 227-residue polypeptide: Lipoprotein-releasing system ATP-binding protein LolD (227 aa).

The ABC transporter domain occupies Leu-6–Ala-227. Gly-42 to Ser-49 serves as a coordination point for ATP.

It belongs to the ABC transporter superfamily. Lipoprotein translocase (TC 3.A.1.125) family. As to quaternary structure, the complex is composed of two ATP-binding proteins (LolD) and two transmembrane proteins (LolC and LolE).

The protein localises to the cell inner membrane. In terms of biological role, part of the ABC transporter complex LolCDE involved in the translocation of mature outer membrane-directed lipoproteins, from the inner membrane to the periplasmic chaperone, LolA. Responsible for the formation of the LolA-lipoprotein complex in an ATP-dependent manner. The protein is Lipoprotein-releasing system ATP-binding protein LolD of Haemophilus influenzae (strain 86-028NP).